A 250-amino-acid chain; its full sequence is 2,3-bisphosphoglycerate-dependent phosphoglycerate mutase (250 aa).

Residues Arg-10–Asn-17, Thr-23–Gly-24, Arg-62, Glu-89–Tyr-92, Lys-100, Arg-116–Arg-117, and Gly-185–Asn-186 each bind substrate. The Tele-phosphohistidine intermediate role is filled by His-11. Glu-89 serves as the catalytic Proton donor/acceptor.

This sequence belongs to the phosphoglycerate mutase family. BPG-dependent PGAM subfamily. Homodimer.

It catalyses the reaction (2R)-2-phosphoglycerate = (2R)-3-phosphoglycerate. It functions in the pathway carbohydrate degradation; glycolysis; pyruvate from D-glyceraldehyde 3-phosphate: step 3/5. Its function is as follows. Catalyzes the interconversion of 2-phosphoglycerate and 3-phosphoglycerate. This Shigella boydii serotype 4 (strain Sb227) protein is 2,3-bisphosphoglycerate-dependent phosphoglycerate mutase.